A 186-amino-acid polypeptide reads, in one-letter code: Ribosome-recycling factor (186 aa).

Residues 140–163 (LKKAEKDGDIGQDEGRSLSERVQK) form a disordered region.

The protein belongs to the RRF family.

It is found in the cytoplasm. Functionally, responsible for the release of ribosomes from messenger RNA at the termination of protein biosynthesis. May increase the efficiency of translation by recycling ribosomes from one round of translation to another. The sequence is that of Ribosome-recycling factor from Rhizobium rhizogenes (strain K84 / ATCC BAA-868) (Agrobacterium radiobacter).